A 685-amino-acid chain; its full sequence is MLLPRMLEEVVLAVPARDYDRVVAGLAVEGIFHVDSPPQGVKGEVDRSYRALLTQASERSSRIRQYFDLAGVEPYRVSGVEIEVGGWGESWKRYLEKYSGVEKFYSGLLEEYSEAEARLKELLDIEARIAPVAHLDVDIARLYRSGAFDFAVYYGSYSEGLESRVGEIVSRVGGLAAVEASGGSVVVAVAVPKGALSKISPEILRLNLSIYTPPEGVPGSPREAMEYIRGEKARLGRRLVSIQEMASERLGELAEFYTVVTAFENIFKFLVSTLRRGETRIVRGFVDVRDSGRLRSIVDRMTRGSYVLLSLGVRRGGEAPIPSKVDLPQFLKPFSRVVELYGYPEPNEIVPTVFLAITLPLTFALMFPDAGQGLLVLLFSLFYLRRVSRDWAYVIAVMGGASVVSGLLAGEVFGPLVSKMLGLPELWYRLGLETPPYAMPTYAIDHGEEELVPVLVYRALNVSLFMGAFMLSFGTFLGVVNGVIKRDWVGLVESRLPRFLLFASITGPFLVYMDAGEAGSVLRQALLELGGDSIAAKLVLAGSVLGLAWMLLAGPIIYMLEGHSPLAGLANSFLEAYESLLMLVGNIPSFLRIMALALAHSSLMFVIYYLTVMIMQGGILADVVGALLYVGGNLAVAAMEGLLAFAHASRLHFYEWFSKFYSGTGVPYTPIKVEGVRIKIAGQTF.

7 helical membrane-spanning segments follow: residues 172–192 (VGGL…VAVP), 348–368 (EIVP…LMFP), 394–414 (VIAV…EVFG), 464–484 (LFMG…NGVI), 538–558 (LVLA…PIIY), 604–624 (MFVI…ADVV), and 626–646 (ALLY…LAFA).

The protein belongs to the V-ATPase 116 kDa subunit family. As to quaternary structure, has multiple subunits with at least A(3), B(3), C, D, E, F, H, I and proteolipid K(x).

Its subcellular location is the cell membrane. Functionally, component of the A-type ATP synthase that produces ATP from ADP in the presence of a proton gradient across the membrane. The protein is A-type ATP synthase subunit I of Aeropyrum pernix (strain ATCC 700893 / DSM 11879 / JCM 9820 / NBRC 100138 / K1).